The chain runs to 378 residues: Succinate--CoA ligase [GDP-forming] subunit beta (378 aa).

Residues 9–235 (KEILARYGVP…VEAEHPLEVE (227 aa)) enclose the ATP-grasp domain. Residues Lys-45, 52-54 (GRG), Val-94, and Glu-99 each bind GTP. Asn-190 and Asp-204 together coordinate Mg(2+). Substrate contacts are provided by residues Asn-255 and 312 to 314 (GIT).

Belongs to the succinate/malate CoA ligase beta subunit family. In terms of assembly, heterotetramer of two alpha and two beta subunits. Mg(2+) serves as cofactor.

The catalysed reaction is GTP + succinate + CoA = succinyl-CoA + GDP + phosphate. The enzyme catalyses succinate + ATP + CoA = succinyl-CoA + ADP + phosphate. It participates in carbohydrate metabolism; tricarboxylic acid cycle; succinate from succinyl-CoA (ligase route): step 1/1. In terms of biological role, succinyl-CoA synthetase functions in the citric acid cycle (TCA), coupling the hydrolysis of succinyl-CoA to the synthesis of either ATP or GTP and thus represents the only step of substrate-level phosphorylation in the TCA. The beta subunit provides nucleotide specificity of the enzyme and binds the substrate succinate, while the binding sites for coenzyme A and phosphate are found in the alpha subunit. Can use either ATP or GTP, but prefers GTP. The polypeptide is Succinate--CoA ligase [GDP-forming] subunit beta (Thermus thermophilus).